Consider the following 766-residue polypeptide: Flocculation suppression protein (766 aa).

Disordered stretches follow at residues 1–52, 129–181, 203–247, 547–619, and 657–766; these read MSEE…HGSK, HDHS…PTKI, KRRA…SSNS, KPVP…SISG, and SVTP…KVKM. Low complexity-rich tracts occupy residues 8 to 19 and 134 to 147; these read SAPAPASTPAPA and NDAN…TNDD. The DNA-binding element occupies 64 to 186; that stretch reads IFIHKLYQIL…NPTKIWEFKH (123 aa). Positions 171 to 181 are enriched in basic and acidic residues; that stretch reads QEKEKSNPTKI. The span at 208 to 224 shows a compositional bias: low complexity; it reads SRNNSSINSRKNSSNQN. Position 220 is a phosphoserine (Ser220). The span at 236 to 247 shows a compositional bias: polar residues; that stretch reads SSIQDPSTSSNS. Phosphoserine is present on Ser556. Polar residues predominate over residues 679–699; sequence AVSSNLINSPMNVEHSSSLSQ. Residues 708–719 are compositionally biased toward low complexity; that stretch reads LPQPSLPTTSTT. Phosphoserine is present on Ser733. A compositionally biased stretch (polar residues) spans 738-750; sequence LLNQEDSSTSSAD.

This sequence in the N-terminal section; belongs to the HSF family.

It is found in the nucleus. Functionally, involved in cell surface assembly and regulation of the gene related to flocculation (asexual cell aggregation). Mutations in SFL1 causes constitutive cell aggregation. This Saccharomyces cerevisiae (strain ATCC 204508 / S288c) (Baker's yeast) protein is Flocculation suppression protein (SFL1).